A 284-amino-acid polypeptide reads, in one-letter code: 2-dehydro-3-deoxyphosphooctonate aldolase (284 aa).

Belongs to the KdsA family.

Its subcellular location is the cytoplasm. It carries out the reaction D-arabinose 5-phosphate + phosphoenolpyruvate + H2O = 3-deoxy-alpha-D-manno-2-octulosonate-8-phosphate + phosphate. The protein operates within carbohydrate biosynthesis; 3-deoxy-D-manno-octulosonate biosynthesis; 3-deoxy-D-manno-octulosonate from D-ribulose 5-phosphate: step 2/3. Its pathway is bacterial outer membrane biogenesis; lipopolysaccharide biosynthesis. This Haemophilus influenzae (strain 86-028NP) protein is 2-dehydro-3-deoxyphosphooctonate aldolase.